The sequence spans 163 residues: Calcium-binding protein 2 (163 aa).

G2 is lipidated: N-myristoyl glycine. 4 EF-hand domains span residues 21–56 (EEIE…LGYM), 72–89 (GKVD…KLLA), 95–130 (IGVR…LLGE), and 132–163 (LSQR…MMSR). Residues D34, D36, D38, Y40, and E45 each coordinate Ca(2+). D108, N110, D112, C114, E119, D145, N147, D149, and E156 together coordinate Ca(2+).

The protein localises to the cytoplasm. Its subcellular location is the perinuclear region. The protein resides in the cell membrane. It is found in the golgi apparatus. Its function is as follows. Required for sound encoding at inner hair cells (IHCs) synapses, likely via inhibition of the inactivation of voltage-gated calcium channel of type 1.3 (Cav1.3) in the IHCs. Required for the normal transfer of light signals through the retina. In Bos taurus (Bovine), this protein is Calcium-binding protein 2 (CABP2).